A 209-amino-acid chain; its full sequence is Vacuolar protein sorting-associated protein 28 homolog (209 aa).

Positions 1-105 (MSQNSNLMRE…REGRPITVKD (105 aa)) constitute a VPS28 N-terminal domain. Positions 109-205 (NVLKHIASIV…AYQSFQKALN (97 aa)) constitute a VPS28 C-terminal domain.

It belongs to the VPS28 family. In terms of assembly, component of the ESCRT-I complex (endosomal sorting complex required for transport I).

The protein resides in the endosome. In terms of biological role, component of the ESCRT-I complex, a regulator of vesicular trafficking process. The protein is Vacuolar protein sorting-associated protein 28 homolog of Caenorhabditis briggsae.